Consider the following 443-residue polypeptide: ATP-dependent protease ATPase subunit HslU (443 aa).

Residues Ile-18, 60–65, Asp-256, Glu-321, and Arg-393 each bind ATP; that span reads GVGKTE.

This sequence belongs to the ClpX chaperone family. HslU subfamily. As to quaternary structure, a double ring-shaped homohexamer of HslV is capped on each side by a ring-shaped HslU homohexamer. The assembly of the HslU/HslV complex is dependent on binding of ATP.

It is found in the cytoplasm. In terms of biological role, ATPase subunit of a proteasome-like degradation complex; this subunit has chaperone activity. The binding of ATP and its subsequent hydrolysis by HslU are essential for unfolding of protein substrates subsequently hydrolyzed by HslV. HslU recognizes the N-terminal part of its protein substrates and unfolds these before they are guided to HslV for hydrolysis. The polypeptide is ATP-dependent protease ATPase subunit HslU (Salmonella arizonae (strain ATCC BAA-731 / CDC346-86 / RSK2980)).